The following is a 687-amino-acid chain: Chloride channel protein ClC-Ka (687 aa).

The next 4 helical transmembrane spans lie at 52-72 (FLMTLGVLMALVSYAMNFAIG), 161-181 (LFLGKVGPFVHLSVMIAAYLG), 202-222 (VAAAAVGVATVFAAPFSGVLF), and 236-256 (YWRGFFAATCGAFIFRLLAVF). The Ca(2+) site is built by glutamate 259, glutamate 261, aspartate 278, and glutamate 281. The next 6 membrane-spanning stretches (helical) occupy residues 282-302 (IFFFVALGGICGVLSCAYLFC), 329-349 (ALATLLLASITYPPGVGHFLA), 396-416 (FTIFGTLAFFLVMKFWMLILA), 417-437 (TTIPMPAGYFMPIFILGAAIG), 452-472 (IVTGGVTNPIMPGGYALAGAA), and 486-506 (LLAFELTGQIVHALPVLMAVL). Topologically, residues 507 to 687 (AANAIAQSCQ…SNLTNPPAPK (181 aa)) are cytoplasmic. 2 CBS domains span residues 551-609 (MNHS…EPPS) and 626-684 (CPTE…TNPP).

The protein belongs to the chloride channel (TC 2.A.49) family. CLCNKA subfamily. In terms of assembly, homodimer. Interacts with BSND.

It localises to the basolateral cell membrane. The catalysed reaction is chloride(in) = chloride(out). The enzyme catalyses bromide(in) = bromide(out). It carries out the reaction nitrate(in) = nitrate(out). It catalyses the reaction iodide(out) = iodide(in). With respect to regulation, activated by extracellular Ca(2+) and inhibited by extracellular acidic pH. Its function is as follows. Anion-selective channel permeable to small monovalent anions with ion selectivity for chloride &gt; bromide &gt; nitrate &gt; iodide. Forms a homodimeric channel where each subunit has its own ion conduction pathway. May conduct double-barreled currents controlled by two types of gates, two fast gates that control each subunit independently and a slow common gate that opens and shuts off both subunits simultaneously. Assembles with the regulatory subunit BSND/Barttin for sorting at the basolateral plasma membrane domain and functional switch to the ion conducting state. CLCNKA:BSND channels display mostly a linear current-voltage relationship with fast gating at negative potentials. Mediates transepithelial chloride transport from the lumen to interstitial compartment along the thin ascending limb of Henle's loop, contributing to generation of hypertonic medullary interstitium as a countercurrent system to achieve urine concentration. Conducts chloride currents in the stria vascularis of the inner ear to establish the endocochlear potential necessary for normal hearing. The protein is Chloride channel protein ClC-Ka of Homo sapiens (Human).